Consider the following 316-residue polypeptide: uncharacterized protein (316 aa).

The protein belongs to the chlamydial CPn_0441/CT_007/TC_0275 family.

This is an uncharacterized protein from Chlamydia pneumoniae (Chlamydophila pneumoniae).